The sequence spans 441 residues: GTPase Der (441 aa).

EngA-type G domains lie at 4-169 (SIVA…PPEA) and 178-353 (PRIA…QNRN). Residues 10 to 17 (GRPNVGKS), 57 to 61 (DTGGI), 120 to 123 (NKVD), 184 to 191 (GKPNVGKS), 231 to 235 (DTAGL), and 296 to 299 (NKWD) each bind GTP. In terms of domain architecture, KH-like spans 354 to 438 (LRISTGVLNE…SLKFFIRERK (85 aa)).

The protein belongs to the TRAFAC class TrmE-Era-EngA-EngB-Septin-like GTPase superfamily. EngA (Der) GTPase family. In terms of assembly, associates with the 50S ribosomal subunit.

In terms of biological role, GTPase that plays an essential role in the late steps of ribosome biogenesis. This is GTPase Der from Lachnoclostridium phytofermentans (strain ATCC 700394 / DSM 18823 / ISDg) (Clostridium phytofermentans).